An 863-amino-acid polypeptide reads, in one-letter code: Leucine--tRNA ligase (863 aa).

A 'HIGH' region motif is present at residues 40 to 51; sequence PYPSGAGLHVGH. Positions 635 to 639 match the 'KMSKS' region motif; sequence KMSKS. Residue K638 coordinates ATP.

It belongs to the class-I aminoacyl-tRNA synthetase family.

Its subcellular location is the cytoplasm. The catalysed reaction is tRNA(Leu) + L-leucine + ATP = L-leucyl-tRNA(Leu) + AMP + diphosphate. This chain is Leucine--tRNA ligase, found in Leptospira interrogans serogroup Icterohaemorrhagiae serovar Lai (strain 56601).